The following is a 371-amino-acid chain: UDP-N-acetylglucosamine--N-acetylmuramyl-(pentapeptide) pyrophosphoryl-undecaprenol N-acetylglucosamine transferase (371 aa).

Residues 10 to 12 (TGG), asparagine 124, arginine 165, serine 197, isoleucine 251, and glutamine 296 contribute to the UDP-N-acetyl-alpha-D-glucosamine site.

Belongs to the glycosyltransferase 28 family. MurG subfamily.

The protein resides in the cell membrane. The catalysed reaction is di-trans,octa-cis-undecaprenyl diphospho-N-acetyl-alpha-D-muramoyl-L-alanyl-D-glutamyl-meso-2,6-diaminopimeloyl-D-alanyl-D-alanine + UDP-N-acetyl-alpha-D-glucosamine = di-trans,octa-cis-undecaprenyl diphospho-[N-acetyl-alpha-D-glucosaminyl-(1-&gt;4)]-N-acetyl-alpha-D-muramoyl-L-alanyl-D-glutamyl-meso-2,6-diaminopimeloyl-D-alanyl-D-alanine + UDP + H(+). Its pathway is cell wall biogenesis; peptidoglycan biosynthesis. In terms of biological role, cell wall formation. Catalyzes the transfer of a GlcNAc subunit on undecaprenyl-pyrophosphoryl-MurNAc-pentapeptide (lipid intermediate I) to form undecaprenyl-pyrophosphoryl-MurNAc-(pentapeptide)GlcNAc (lipid intermediate II). In Carboxydothermus hydrogenoformans (strain ATCC BAA-161 / DSM 6008 / Z-2901), this protein is UDP-N-acetylglucosamine--N-acetylmuramyl-(pentapeptide) pyrophosphoryl-undecaprenol N-acetylglucosamine transferase.